We begin with the raw amino-acid sequence, 168 residues long: Phosphopantetheine adenylyltransferase (168 aa).

A substrate-binding site is contributed by threonine 9. Residues 9–10 (TF) and histidine 17 contribute to the ATP site. 3 residues coordinate substrate: lysine 41, leucine 73, and arginine 87. ATP-binding positions include 88-90 (GLR), glutamate 98, and 123-129 (YQFISGT).

It belongs to the bacterial CoaD family. Homohexamer. It depends on Mg(2+) as a cofactor.

The protein localises to the cytoplasm. The enzyme catalyses (R)-4'-phosphopantetheine + ATP + H(+) = 3'-dephospho-CoA + diphosphate. It functions in the pathway cofactor biosynthesis; coenzyme A biosynthesis; CoA from (R)-pantothenate: step 4/5. Functionally, reversibly transfers an adenylyl group from ATP to 4'-phosphopantetheine, yielding dephospho-CoA (dPCoA) and pyrophosphate. This Ralstonia nicotianae (strain ATCC BAA-1114 / GMI1000) (Ralstonia solanacearum) protein is Phosphopantetheine adenylyltransferase.